A 321-amino-acid polypeptide reads, in one-letter code: GTP 3',8-cyclase (321 aa).

In terms of domain architecture, Radical SAM core spans Ser5–Glu233. GTP is bound at residue Arg14. Cys21 and Cys25 together coordinate [4Fe-4S] cluster. Tyr27 lines the S-adenosyl-L-methionine pocket. Cys28 lines the [4Fe-4S] cluster pocket. Residue Arg64 participates in GTP binding. Residue Gly68 participates in S-adenosyl-L-methionine binding. A GTP-binding site is contributed by Ser95. Ser119 serves as a coordination point for S-adenosyl-L-methionine. Residue Lys155 participates in GTP binding. S-adenosyl-L-methionine is bound at residue Met189. [4Fe-4S] cluster is bound by residues Cys249 and Cys252. GTP is bound at residue Arg254 to Arg256. Residue Cys266 participates in [4Fe-4S] cluster binding.

Belongs to the radical SAM superfamily. MoaA family. Monomer and homodimer. [4Fe-4S] cluster is required as a cofactor.

It carries out the reaction GTP + AH2 + S-adenosyl-L-methionine = (8S)-3',8-cyclo-7,8-dihydroguanosine 5'-triphosphate + 5'-deoxyadenosine + L-methionine + A + H(+). It participates in cofactor biosynthesis; molybdopterin biosynthesis. In terms of biological role, catalyzes the cyclization of GTP to (8S)-3',8-cyclo-7,8-dihydroguanosine 5'-triphosphate. In Helicobacter pylori (strain HPAG1), this protein is GTP 3',8-cyclase.